A 780-amino-acid chain; its full sequence is Pentatricopeptide repeat-containing protein At1g79540 (780 aa).

PPR repeat units lie at residues 91-125, 126-160, 161-196, 197-231, 232-266, 267-301, 302-336, 337-371, 372-406, 407-441, 442-476, 481-515, 516-550, 551-585, 653-687, 688-722, and 723-758; these read SRES…GVSV, DSYC…DCRP, DVFT…NCSP, NLYT…GISP, NRVT…GNYP, DSVA…GFVL, GLRG…NIKP, DIIL…GISP, DTYC…ESFP, DACT…GCSP, SVAT…RPAS, LSHS…GSSP, DIVS…GLSP, DSVT…RHSP, TLGP…KILV, TPPS…NFKL, and MPRV…GYNV.

The protein belongs to the PPR family. P subfamily.

The polypeptide is Pentatricopeptide repeat-containing protein At1g79540 (Arabidopsis thaliana (Mouse-ear cress)).